The chain runs to 424 residues: GTPase Obg (424 aa).

The Obg domain occupies 1–158; the sequence is MFYDQAKIYV…RNLLLELKLL (158 aa). Positions 159-329 constitute an OBG-type G domain; that stretch reads ADVGLVGFPN…LVYAAAKALP (171 aa). Residues 165–172, 190–194, 212–215, 282–285, and 310–312 each bind GTP; these read GFPNVGKS, FTTLV, DIPG, NKMD, and SAA. Mg(2+)-binding residues include S172 and T192. Positions 347-424 constitute an OCT domain; it reads TQASAPHRFE…IAGIEFEWEE (78 aa).

The protein belongs to the TRAFAC class OBG-HflX-like GTPase superfamily. OBG GTPase family. As to quaternary structure, monomer. Mg(2+) is required as a cofactor.

The protein localises to the cytoplasm. An essential GTPase which binds GTP, GDP and possibly (p)ppGpp with moderate affinity, with high nucleotide exchange rates and a fairly low GTP hydrolysis rate. Plays a role in control of the cell cycle, stress response, ribosome biogenesis and in those bacteria that undergo differentiation, in morphogenesis control. The polypeptide is GTPase Obg (Desulfitobacterium hafniense (strain Y51)).